Reading from the N-terminus, the 79-residue chain is Serine protease inhibitor Kazal-type 1 (79 aa).

The signal sequence occupies residues 1-23 (MKVTGIFLLSALALLSLSGNTGA). The Kazal-like domain occupies 26–79 (LGREAKCYNELNGCTKIYDPVCGTDGNTYPNECVLCFENRKRQTSILIQKSGPC). Disulfide bonds link C32–C61, C39–C58, and C47–C79.

It localises to the secreted. Serine protease inhibitor which exhibits anti-trypsin activity. In the pancreas, protects against trypsin-catalyzed premature activation of zymogens. Functionally, in the male reproductive tract, binds to sperm heads where it modulates sperm capacitance by inhibiting calcium uptake and nitrogen oxide (NO) production. This Homo sapiens (Human) protein is Serine protease inhibitor Kazal-type 1 (SPINK1).